The chain runs to 150 residues: FAD synthase (150 aa).

Residues 16–17, 21–24, and Asp-102 each bind ATP; these read VF and HVGH.

This sequence belongs to the archaeal FAD synthase family. As to quaternary structure, homodimer. Requires a divalent metal cation as cofactor.

The enzyme catalyses FMN + ATP + H(+) = FAD + diphosphate. It participates in cofactor biosynthesis; FAD biosynthesis; FAD from FMN: step 1/1. Catalyzes the transfer of the AMP portion of ATP to flavin mononucleotide (FMN) to produce flavin adenine dinucleotide (FAD) coenzyme. This chain is FAD synthase, found in Thermococcus onnurineus (strain NA1).